The sequence spans 91 residues: Ragulator complex protein LAMTOR5 homolog (91 aa).

The protein belongs to the LAMTOR5 family. As to quaternary structure, part of the Ragulator complex.

The protein localises to the cytoplasm. It is found in the lysosome. Functionally, regulator of the TOR pathway, a signaling cascade that promotes cell growth in response to growth factors, energy levels, and amino acids. As part of the Ragulator complex, may activate the TOR signaling cascade in response to amino acids. In Nematostella vectensis (Starlet sea anemone), this protein is Ragulator complex protein LAMTOR5 homolog.